The chain runs to 805 residues: Mediator of RNA polymerase II transcription subunit 25 (805 aa).

Disordered stretches follow at residues 308–332 and 647–691; these read NQMP…PQNT and QQPQ…NPQL. Residues 647–678 are compositionally biased toward low complexity; sequence QQPQQAASQAPPQATQTTVQAPGQPQNPQPGA. The LXXLL motif motif lies at 691 to 695; the sequence is LRNLL.

It belongs to the Mediator complex subunit 25 family. Component of the Mediator complex.

The protein localises to the nucleus. Functionally, component of the Mediator complex, a coactivator involved in the regulated transcription of nearly all RNA polymerase II-dependent genes. Mediator functions as a bridge to convey information from gene-specific regulatory proteins to the basal RNA polymerase II transcription machinery. Mediator is recruited to promoters by direct interactions with regulatory proteins and serves as a scaffold for the assembly of a functional preinitiation complex with RNA polymerase II and the general transcription factors. This Xenopus tropicalis (Western clawed frog) protein is Mediator of RNA polymerase II transcription subunit 25 (med25).